The following is a 199-amino-acid chain: ATP-dependent Clp protease proteolytic subunit (199 aa).

Residue S98 is the Nucleophile of the active site. H123 is a catalytic residue.

Belongs to the peptidase S14 family. In terms of assembly, fourteen ClpP subunits assemble into 2 heptameric rings which stack back to back to give a disk-like structure with a central cavity, resembling the structure of eukaryotic proteasomes.

Its subcellular location is the cytoplasm. The catalysed reaction is Hydrolysis of proteins to small peptides in the presence of ATP and magnesium. alpha-casein is the usual test substrate. In the absence of ATP, only oligopeptides shorter than five residues are hydrolyzed (such as succinyl-Leu-Tyr-|-NHMec, and Leu-Tyr-Leu-|-Tyr-Trp, in which cleavage of the -Tyr-|-Leu- and -Tyr-|-Trp bonds also occurs).. Cleaves peptides in various proteins in a process that requires ATP hydrolysis. Has a chymotrypsin-like activity. Plays a major role in the degradation of misfolded proteins. In Ehrlichia chaffeensis (strain ATCC CRL-10679 / Arkansas), this protein is ATP-dependent Clp protease proteolytic subunit.